Consider the following 240-residue polypeptide: Small ribosomal subunit protein uS3 (240 aa).

The KH type-2 domain maps to 21–92 (LNEFFTRELA…TIVLYAERVQ (72 aa)). Phosphothreonine occurs at positions 44 and 70. Ser97 carries the post-translational modification Phosphoserine. Lys106 is covalently cross-linked (Glycyl lysine isopeptide (Lys-Gly) (interchain with G-Cter in ubiquitin)). Ser129 carries the post-translational modification Phosphoserine. Residues Lys132 and Lys141 each participate in a glycyl lysine isopeptide (Lys-Gly) (interchain with G-Cter in ubiquitin) cross-link. The residue at position 146 (Arg146) is an Omega-N-methylarginine; by SFM1. Residues Lys151, Lys200, and Lys212 each participate in a glycyl lysine isopeptide (Lys-Gly) (interchain with G-Cter in ubiquitin) cross-link. The segment at 212–240 (KEEEPILAPSVKDYRPAEETEAQAEPVEA) is disordered. Ser221 is modified (phosphoserine). Acidic residues predominate over residues 230–240 (ETEAQAEPVEA). Thr231 is modified (phosphothreonine).

This sequence belongs to the universal ribosomal protein uS3 family. Component of the small ribosomal subunit (SSU). Mature yeast ribosomes consist of a small (40S) and a large (60S) subunit. The 40S small subunit contains 1 molecule of ribosomal RNA (18S rRNA) and 33 different proteins (encoded by 57 genes). The large 60S subunit contains 3 rRNA molecules (25S, 5.8S and 5S rRNA) and 46 different proteins (encoded by 81 genes). Post-translationally, ubiquitinated at Lys-212 in response to stalled ribosomes. Ubiquitination leads to activation of the No-Go Decay (NGD) pathway and degradation of non-functional 18S rRNA: first monoubiquitinated at Lys-212 by MAG2, followed by formation of 'Lys-63'-linked polyubiquitin chains on monoubiquitin by HEL2 and RSP5.

Its subcellular location is the cytoplasm. Component of the ribosome, a large ribonucleoprotein complex responsible for the synthesis of proteins in the cell. The small ribosomal subunit (SSU) binds messenger RNAs (mRNAs) and translates the encoded message by selecting cognate aminoacyl-transfer RNA (tRNA) molecules. The large subunit (LSU) contains the ribosomal catalytic site termed the peptidyl transferase center (PTC), which catalyzes the formation of peptide bonds, thereby polymerizing the amino acids delivered by tRNAs into a polypeptide chain. The nascent polypeptides leave the ribosome through a tunnel in the LSU and interact with protein factors that function in enzymatic processing, targeting, and the membrane insertion of nascent chains at the exit of the ribosomal tunnel. This Saccharomyces cerevisiae (strain ATCC 204508 / S288c) (Baker's yeast) protein is Small ribosomal subunit protein uS3.